A 700-amino-acid polypeptide reads, in one-letter code: MWWGGRGQSFNIAPQKEEPEMGLSGPKSNPGNRMPEPSSHQLGSCLASGCLPGEHILAWAPGRRKGPGLDLPGTLICTNFRVTFQPCGWQRKQDTPLSSENDFALINIGRLEAVSGLSRVQLLRPGSQLKFIPEELLLHGRDFRLLRVGFEAGGLAPQAFQVTMAIIQARAQSSQVQQYRGITLSKVGKVSGSRKPPIPLLETLEDWETECKKQGARGWRVSTVNERFDVATSLSGYFWVPNRILDSEVRRAFAHFHQGRGPRLSWHHPGGSDLLRCGGFYIASDPNKEDIRAVESMLQAGHSDVVLVETMDEMPSLADIQLAHLKLRALCLPDSSVAEDKWLSALEGTRWLDYVRSCLRKASDISVLVTSRVRSVVLQELGDRDFNGLLSSLVQLLLAPEARTLFGFQSLVQREWVAAGHPFLTRLGDTGASEEAPVFPLFLDCAWQLLQQFPAEFEFSEFFLLALHDSIRVPDTLTFLRNTPWERGKKSGQFNSYTQVYTPEYSQPLAGSSANLHLSVWDWDLRYSKEQISQFLNPGYDPEHCPDSRFSRQQQSLMVPGPPSSMWLFSRGTLTPLNQLCPWQDSSSLLAVSSHWLPRPARSSESLADQEWGLPSHWGACPLPPGLLLPGYLGPQIRFWKRCYLRGRPEVQMGSSALTVSALQDELSHLQELLRQWTPRISPEDQSKKRDPNTILSQIC.

The tract at residues 1-39 (MWWGGRGQSFNIAPQKEEPEMGLSGPKSNPGNRMPEPSS) is disordered. The region spanning 201-644 (LETLEDWETE…PQIRFWKRCY (444 aa)) is the Myotubularin phosphatase domain.

Belongs to the protein-tyrosine phosphatase family. Non-receptor class myotubularin subfamily.

The sequence is that of Myotubularin-related protein 11 (Mtmr11) from Mus musculus (Mouse).